The chain runs to 618 residues: Proline--tRNA ligase (618 aa).

It belongs to the class-II aminoacyl-tRNA synthetase family. ProS type 1 subfamily. As to quaternary structure, homodimer.

Its subcellular location is the cytoplasm. It carries out the reaction tRNA(Pro) + L-proline + ATP = L-prolyl-tRNA(Pro) + AMP + diphosphate. Functionally, catalyzes the attachment of proline to tRNA(Pro) in a two-step reaction: proline is first activated by ATP to form Pro-AMP and then transferred to the acceptor end of tRNA(Pro). As ProRS can inadvertently accommodate and process non-cognate amino acids such as alanine and cysteine, to avoid such errors it has two additional distinct editing activities against alanine. One activity is designated as 'pretransfer' editing and involves the tRNA(Pro)-independent hydrolysis of activated Ala-AMP. The other activity is designated 'posttransfer' editing and involves deacylation of mischarged Ala-tRNA(Pro). The misacylated Cys-tRNA(Pro) is not edited by ProRS. In Streptococcus pyogenes serotype M18 (strain MGAS8232), this protein is Proline--tRNA ligase.